Here is a 377-residue protein sequence, read N- to C-terminus: Porphobilinogen deaminase (377 aa).

Cysteine 269 is subject to S-(dipyrrolylmethanemethyl)cysteine.

This sequence belongs to the HMBS family. In terms of assembly, monomer. Dipyrromethane is required as a cofactor.

The catalysed reaction is 4 porphobilinogen + H2O = hydroxymethylbilane + 4 NH4(+). Its pathway is porphyrin-containing compound metabolism; protoporphyrin-IX biosynthesis; coproporphyrinogen-III from 5-aminolevulinate: step 2/4. Functionally, tetrapolymerization of the monopyrrole PBG into the hydroxymethylbilane pre-uroporphyrinogen in several discrete steps. In Micrococcus luteus (strain ATCC 4698 / DSM 20030 / JCM 1464 / CCM 169 / CCUG 5858 / IAM 1056 / NBRC 3333 / NCIMB 9278 / NCTC 2665 / VKM Ac-2230) (Micrococcus lysodeikticus), this protein is Porphobilinogen deaminase.